Reading from the N-terminus, the 107-residue chain is Putative double-stranded DNA mimic protein YE2228 (107 aa).

The protein belongs to the putative dsDNA mimic protein family.

May act as a double-stranded DNA (dsDNA) mimic. Probably regulates the activity of a dsDNA-binding protein. The chain is Putative double-stranded DNA mimic protein YE2228 from Yersinia enterocolitica serotype O:8 / biotype 1B (strain NCTC 13174 / 8081).